A 413-amino-acid polypeptide reads, in one-letter code: Paxillin homolog 1 (413 aa).

A compositionally biased stretch (basic and acidic residues) spans 33–45; the sequence is HISDRRSQSRDDF. A disordered region spans residues 33-157; that stretch reads HISDRRSQSR…PLHSDSMIGT (125 aa). Over residues 49-69 the composition is skewed to polar residues; sequence YDLQGNLNTQSVSNGNITTSP. Residues 73–92 are compositionally biased toward basic and acidic residues; the sequence is RSSEGKDYSKSQERIYENES. A compositionally biased stretch (polar residues) spans 118–143; that stretch reads ASSSRKSLGPPSQAQSYSDVRSNGRS. LIM zinc-binding domains lie at 174-232, 233-292, 293-350, and 351-410; these read GDCA…NQFS, PKCQ…LFAP, KCNG…ESRG, and SICS…TYAL.

Belongs to the paxillin family. As to expression, isoform a: Expressed in all 95 body wall muscle cells as well as in the pharyngeal muscle cells (at protein level). Isoform c: Expressed in the body wall muscle cells and in the pharyngeal muscle cells.

The protein localises to the cell junction. It is found in the adherens junction. The protein resides in the cell membrane. Its subcellular location is the cytoplasm. It localises to the myofibril. The protein localises to the sarcomere. It is found in the m line. The protein resides in the cell projection. Its subcellular location is the podosome. Its function is as follows. Required for myofilament organization of the pharyngeal sarcomeres and for pharyngeal muscle contractions and hence for pharyngeal pumping. Together with lin-8, might be required for myofilament organization in the body wall muscles. This Caenorhabditis elegans protein is Paxillin homolog 1 (pxl-1).